The following is a 103-amino-acid chain: Small ribosomal subunit protein uS10 (103 aa).

Belongs to the universal ribosomal protein uS10 family. As to quaternary structure, part of the 30S ribosomal subunit.

Its function is as follows. Involved in the binding of tRNA to the ribosomes. The protein is Small ribosomal subunit protein uS10 of Buchnera aphidicola subsp. Cinara cedri (strain Cc).